The sequence spans 309 residues: Glutaminase (309 aa).

Ser64, Asn114, Glu160, Asn167, Tyr191, Tyr243, and Val261 together coordinate substrate.

It belongs to the glutaminase family. As to quaternary structure, homotetramer.

The enzyme catalyses L-glutamine + H2O = L-glutamate + NH4(+). The sequence is that of Glutaminase from Azorhizobium caulinodans (strain ATCC 43989 / DSM 5975 / JCM 20966 / LMG 6465 / NBRC 14845 / NCIMB 13405 / ORS 571).